We begin with the raw amino-acid sequence, 207 residues long: uncharacterized protein (207 aa).

Residues 177 to 197 (LILAIGFIIGILLPTFFILLG) traverse the membrane as a helical segment.

The protein resides in the membrane. This is an uncharacterized protein from Haemophilus influenzae (strain ATCC 51907 / DSM 11121 / KW20 / Rd).